The following is a 265-amino-acid chain: 3-methyl-2-oxobutanoate hydroxymethyltransferase (265 aa).

Asp-43 and Asp-82 together coordinate Mg(2+). Residues 43-44 (DS), Asp-82, and Lys-111 contribute to the 3-methyl-2-oxobutanoate site. Mg(2+) is bound at residue Glu-113. The Proton acceptor role is filled by Glu-180.

Belongs to the PanB family. As to quaternary structure, homodecamer; pentamer of dimers. The cofactor is Mg(2+).

The protein resides in the cytoplasm. It catalyses the reaction 3-methyl-2-oxobutanoate + (6R)-5,10-methylene-5,6,7,8-tetrahydrofolate + H2O = 2-dehydropantoate + (6S)-5,6,7,8-tetrahydrofolate. Its pathway is cofactor biosynthesis; (R)-pantothenate biosynthesis; (R)-pantoate from 3-methyl-2-oxobutanoate: step 1/2. Its function is as follows. Catalyzes the reversible reaction in which hydroxymethyl group from 5,10-methylenetetrahydrofolate is transferred onto alpha-ketoisovalerate to form ketopantoate. The protein is 3-methyl-2-oxobutanoate hydroxymethyltransferase of Francisella tularensis subsp. holarctica (strain OSU18).